A 768-amino-acid chain; its full sequence is UPF0313 protein VV1_2212 (768 aa).

Residues 363 to 640 (AYDMIKTSVN…LHKALLRYHD (278 aa)) form the Radical SAM core domain. [4Fe-4S] cluster contacts are provided by cysteine 377, cysteine 381, and cysteine 384. The interval 674–768 (DARTPAQRRK…GGRNQPSRAR (95 aa)) is disordered. The segment covering 679-689 (AQRRKSGRHGA) has biased composition (basic residues). Polar residues predominate over residues 719-731 (GGQSNSAPSRSGS).

This sequence belongs to the UPF0313 family. Requires [4Fe-4S] cluster as cofactor.

The protein is UPF0313 protein VV1_2212 of Vibrio vulnificus (strain CMCP6).